The chain runs to 343 residues: Dehydrodolichyl diphosphate synthase complex subunit SRT1 (343 aa).

Belongs to the UPP synthase family. Forms an active dehydrodolichyl diphosphate synthase complex with NUS1. Requires Mg(2+) as cofactor.

It is found in the lipid droplet. It catalyses the reaction n isopentenyl diphosphate + (2E,6E)-farnesyl diphosphate = a di-trans,poly-cis-polyprenyl diphosphate + n diphosphate. It functions in the pathway protein modification; protein glycosylation. Functionally, with NUS1, forms the dehydrodolichyl diphosphate synthase (DDS) complex, an essential component of the dolichol monophosphate (Dol-P) biosynthetic machinery. Adds multiple copies of isopentenyl pyrophosphate (IPP) to farnesyl pyrophosphate (FPP) to produce dehydrodolichyl diphosphate (Dedol-PP), a precursor of dolichol which is utilized as a sugar carrier in protein glycosylation in the endoplasmic reticulum (ER). The polypeptide is Dehydrodolichyl diphosphate synthase complex subunit SRT1 (Saccharomyces cerevisiae (strain ATCC 204508 / S288c) (Baker's yeast)).